Here is an 81-residue protein sequence, read N- to C-terminus: MSHSVKVYDTCIGCTQCVRACPTDVLEMIPWDGCKAKQIASAPRTEDCVGCKRCESACPTDFLSVRVYLGAETTRSMGLAY.

4Fe-4S ferredoxin-type domains are found at residues 2 to 31 (SHSV…MIPW) and 39 to 68 (IASA…VRVY). Positions 11, 14, 17, 21, 48, 51, 54, and 58 each coordinate [4Fe-4S] cluster.

As to quaternary structure, the eukaryotic PSI reaction center is composed of at least 11 subunits. [4Fe-4S] cluster is required as a cofactor.

The protein resides in the plastid thylakoid membrane. It catalyses the reaction reduced [plastocyanin] + hnu + oxidized [2Fe-2S]-[ferredoxin] = oxidized [plastocyanin] + reduced [2Fe-2S]-[ferredoxin]. Apoprotein for the two 4Fe-4S centers FA and FB of photosystem I (PSI); essential for photochemical activity. FB is the terminal electron acceptor of PSI, donating electrons to ferredoxin. The C-terminus interacts with PsaA/B/D and helps assemble the protein into the PSI complex. Required for binding of PsaD and PsaE to PSI. PSI is a plastocyanin-ferredoxin oxidoreductase, converting photonic excitation into a charge separation, which transfers an electron from the donor P700 chlorophyll pair to the spectroscopically characterized acceptors A0, A1, FX, FA and FB in turn. The sequence is that of Photosystem I iron-sulfur center from Cuscuta obtusiflora (Peruvian dodder).